Here is a 496-residue protein sequence, read N- to C-terminus: MTTDQLPAELERVHMVGIGGAGMSGIARILLDRGGLVSGSDAKESRGIHALRARGAQIRIGHDASSLDLLPGGPTAVITTHAAIPKTNPELVEARRRGIPVILRPAVLAKLMDGRTTLMVTGTHGKTTTTSMLIVALQHCGRDPSFAVGGEMGEAGTNAHHGSGDCFVAEADESDGSLLEYTPDVAVVTNIETDHLDFYGSADAYVAVFDAFVERLAPGGALVVCVDDPGAAALARRTAELGIRVLRYGSGSHGQAPSGQPLAATLVSWQQQGTEAVAQIRLAGEQQHPLVMRLSVPGRHMALNAMGALLAAIEIGAPTEAVLDGLAGFEGVRRRFELVGTAGGPAPSSTVRVFDDYAHHPTEIAATLAAVRTLLEQSGGGRSIAVFQPHLYSRTKAFAEEFGRALDAADEVFVLDVYGAREQPLAGVSGASVAEHVSVPVRYLPDFSAAAEQVAAAAAPGDVIVTMGAGDVTLLGPEIVTALRVRANRGAPGALR.

Position 122-128 (122-128 (GTHGKTT)) interacts with ATP.

It belongs to the MurCDEF family.

The protein resides in the cytoplasm. The enzyme catalyses UDP-N-acetyl-alpha-D-muramate + L-alanine + ATP = UDP-N-acetyl-alpha-D-muramoyl-L-alanine + ADP + phosphate + H(+). It functions in the pathway cell wall biogenesis; peptidoglycan biosynthesis. Its function is as follows. Cell wall formation. This chain is UDP-N-acetylmuramate--L-alanine ligase, found in Mycolicibacterium paratuberculosis (strain ATCC BAA-968 / K-10) (Mycobacterium paratuberculosis).